The chain runs to 703 residues: ABC transporter G family member 11 (703 aa).

An ABC transporter domain is found at 50 to 293; it reads LTWQDLTVMV…FAQAGFPCPA (244 aa). Residue 87–94 participates in ATP binding; that stretch reads GPSGSGKS. The 213-residue stretch at 382-594 folds into the ABC transmembrane type-2 domain; the sequence is LQTYTLTKRS…ALQGQYQNDL (213 aa). Asparagine 394 is a glycosylation site (N-linked (GlcNAc...) asparagine). 6 helical membrane passes run 406 to 426, 436 to 456, 485 to 505, 513 to 533, 540 to 560, and 628 to 648; these read LLIY…VGTS, CASF…PSFV, TPFL…MVGL, LFFV…MMAI, FLMG…VSGF, and INLS…FIMI. Residues asparagine 671 and asparagine 675 are each glycosylated (N-linked (GlcNAc...) asparagine). Residue serine 688 is modified to Phosphoserine.

It belongs to the ABC transporter superfamily. ABCG family. Eye pigment precursor importer (TC 3.A.1.204) subfamily. Homodimer. Forms heterodimers with ABCG9, ABCG12 and ABCG14 in epidermal cells. As to expression, expressed in seedlings, roots, stems, leaves, flowers, and siliques, mostly in epidermis, trichomes, vasculatures and developing tissues. Follows an uniparental maternal expression in the seed, thus being the product of a maternally expressed imprinted gene. Accumulates in the phloem. Transcripts seem to be transported from shoots to roots.

The protein resides in the cell membrane. Its function is as follows. Required for the cuticle, root suberin and pollen coat development by controlling cutin and maybe wax transport to the extracellular matrix. Involved in developmental plasticity and stress responses. Together with ABCG9 and ABCG14, required for vascular development by regulating lipid/sterol homeostasis. May be a transporter of lignin precursors during tracheary element differentiation. The polypeptide is ABC transporter G family member 11 (Arabidopsis thaliana (Mouse-ear cress)).